A 163-amino-acid chain; its full sequence is Transcriptional repressor NrdR (163 aa).

The segment at 3-34 (CPFCAYADTRVVDSRLADDGGSVRRRRECPQC) is a zinc-finger region. Residues 49–139 (PVVVKTDGRR…VYRRFEDVDA (91 aa)) enclose the ATP-cone domain.

Belongs to the NrdR family. Zn(2+) is required as a cofactor.

Negatively regulates transcription of bacterial ribonucleotide reductase nrd genes and operons by binding to NrdR-boxes. This is Transcriptional repressor NrdR from Acidithiobacillus ferrooxidans (strain ATCC 23270 / DSM 14882 / CIP 104768 / NCIMB 8455) (Ferrobacillus ferrooxidans (strain ATCC 23270)).